Reading from the N-terminus, the 120-residue chain is Large ribosomal subunit protein bL19c (120 aa).

It belongs to the bacterial ribosomal protein bL19 family.

The protein resides in the plastid. It is found in the chloroplast. The sequence is that of Large ribosomal subunit protein bL19c from Thalassiosira pseudonana (Marine diatom).